The sequence spans 714 residues: Centromere/kinetochore protein zw10 (714 aa).

The protein belongs to the ZW10 family.

The protein resides in the cytoplasm. The protein localises to the nucleus. Its subcellular location is the chromosome. It is found in the centromere. It localises to the kinetochore. Functionally, required for accurate chromosome segregation. In Drosophila grimshawi (Hawaiian fruit fly), this protein is Centromere/kinetochore protein zw10 (mit(1)15).